The sequence spans 189 residues: Glycerol-3-phosphate acyltransferase (189 aa).

The next 5 membrane-spanning stretches (helical) occupy residues 1–21 (MVWL…AVLL), 50–70 (KLAI…VLVA), 72–92 (WLGL…IGHL), 111–131 (MLLG…LLTF), and 151–171 (LLAW…GLIV).

It belongs to the PlsY family. Probably interacts with PlsX.

It is found in the cell inner membrane. It carries out the reaction an acyl phosphate + sn-glycerol 3-phosphate = a 1-acyl-sn-glycero-3-phosphate + phosphate. It participates in lipid metabolism; phospholipid metabolism. Functionally, catalyzes the transfer of an acyl group from acyl-phosphate (acyl-PO(4)) to glycerol-3-phosphate (G3P) to form lysophosphatidic acid (LPA). This enzyme utilizes acyl-phosphate as fatty acyl donor, but not acyl-CoA or acyl-ACP. The sequence is that of Glycerol-3-phosphate acyltransferase from Pseudomonas aeruginosa (strain LESB58).